The sequence spans 174 residues: Myeloid-derived growth factor (174 aa).

The N-terminal stretch at 1 to 32 is a signal peptide; sequence MAAPSGRRNGSGGANLWVSLLLAAAALRPVET.

Belongs to the MYDGF family.

It localises to the secreted. The protein resides in the endoplasmic reticulum-Golgi intermediate compartment. It is found in the endoplasmic reticulum. The protein localises to the golgi apparatus. In terms of biological role, bone marrow-derived monocyte and paracrine-acting protein that promotes cardiac myocyte survival and adaptive angiogenesis for cardiac protection and/or repair after myocardial infarction (MI). Stimulates endothelial cell proliferation through a MAPK1/3-, STAT3- and CCND1-mediated signaling pathway. Inhibits cardiac myocyte apoptosis in a PI3K/AKT-dependent signaling pathway. The protein is Myeloid-derived growth factor of Bos taurus (Bovine).